Consider the following 371-residue polypeptide: Peptide chain release factor 2 (371 aa).

At Gln252 the chain carries N5-methylglutamine.

Belongs to the prokaryotic/mitochondrial release factor family. Methylated by PrmC. Methylation increases the termination efficiency of RF2.

It is found in the cytoplasm. In terms of biological role, peptide chain release factor 2 directs the termination of translation in response to the peptide chain termination codons UGA and UAA. This is Peptide chain release factor 2 from Staphylococcus haemolyticus (strain JCSC1435).